Here is a 140-residue protein sequence, read N- to C-terminus: Large ribosomal subunit protein uL16 (140 aa).

Belongs to the universal ribosomal protein uL16 family. Part of the 50S ribosomal subunit.

Functionally, binds 23S rRNA and is also seen to make contacts with the A and possibly P site tRNAs. This is Large ribosomal subunit protein uL16 from Geotalea uraniireducens (strain Rf4) (Geobacter uraniireducens).